Here is a 193-residue protein sequence, read N- to C-terminus: Holliday junction branch migration complex subunit RuvA (193 aa).

A domain I region spans residues 1–64 (MIGRIAGVLL…EDAHLLYGFG (64 aa)). The domain II stretch occupies residues 65 to 139 (TAEERSTFRE…GKIGADLGAM (75 aa)). Residues 139 to 143 (MAGAA) form a flexible linker region. Residues 144–193 (SASDHASDILNALLALGYSEKEALAAVKNVPAGTGVSEGIKLALKALSKG) form a domain III region.

It belongs to the RuvA family. As to quaternary structure, homotetramer. Forms an RuvA(8)-RuvB(12)-Holliday junction (HJ) complex. HJ DNA is sandwiched between 2 RuvA tetramers; dsDNA enters through RuvA and exits via RuvB. An RuvB hexamer assembles on each DNA strand where it exits the tetramer. Each RuvB hexamer is contacted by two RuvA subunits (via domain III) on 2 adjacent RuvB subunits; this complex drives branch migration. In the full resolvosome a probable DNA-RuvA(4)-RuvB(12)-RuvC(2) complex forms which resolves the HJ.

It localises to the cytoplasm. Its function is as follows. The RuvA-RuvB-RuvC complex processes Holliday junction (HJ) DNA during genetic recombination and DNA repair, while the RuvA-RuvB complex plays an important role in the rescue of blocked DNA replication forks via replication fork reversal (RFR). RuvA specifically binds to HJ cruciform DNA, conferring on it an open structure. The RuvB hexamer acts as an ATP-dependent pump, pulling dsDNA into and through the RuvAB complex. HJ branch migration allows RuvC to scan DNA until it finds its consensus sequence, where it cleaves and resolves the cruciform DNA. In Paraburkholderia xenovorans (strain LB400), this protein is Holliday junction branch migration complex subunit RuvA.